A 427-amino-acid chain; its full sequence is Dihydroorotase (427 aa).

Zn(2+) contacts are provided by H57 and H59. Substrate is bound by residues 59–61 (HLR) and N91. 3 residues coordinate Zn(2+): D149, H176, and H229. N275 lines the substrate pocket. D302 lines the Zn(2+) pocket. The active site involves D302. Substrate-binding positions include H306 and 320-321 (FG).

This sequence belongs to the metallo-dependent hydrolases superfamily. DHOase family. Class I DHOase subfamily. Zn(2+) is required as a cofactor.

The enzyme catalyses (S)-dihydroorotate + H2O = N-carbamoyl-L-aspartate + H(+). It functions in the pathway pyrimidine metabolism; UMP biosynthesis via de novo pathway; (S)-dihydroorotate from bicarbonate: step 3/3. Its function is as follows. Catalyzes the reversible cyclization of carbamoyl aspartate to dihydroorotate. The chain is Dihydroorotase from Shouchella clausii (strain KSM-K16) (Alkalihalobacillus clausii).